Reading from the N-terminus, the 145-residue chain is Cystatin-F (145 aa).

A signal peptide spans 1–19 (MRAAGTLLAFCCLVLSTTG). Residue asparagine 62 is glycosylated (N-linked (GlcNAc...) asparagine). The short motif at 81-85 (QIVKG) is the Secondary area of contact element. Residues cysteine 99 and cysteine 110 are joined by a disulfide bond. An N-linked (GlcNAc...) asparagine glycan is attached at asparagine 115. A disulfide bond links cysteine 124 and cysteine 144.

The protein belongs to the cystatin family. As to quaternary structure, homodimer; disulfide-linked. As to expression, primarily expressed in peripheral blood cells and spleen.

Its subcellular location is the secreted. The protein localises to the cytoplasm. Functionally, inhibits papain and cathepsin L but with affinities lower than other cystatins. May play a role in immune regulation through inhibition of a unique target in the hematopoietic system. The polypeptide is Cystatin-F (CST7) (Homo sapiens (Human)).